An 85-amino-acid polypeptide reads, in one-letter code: Large ribosomal subunit protein bL27 (85 aa).

The interval 1 to 20 (MATKKAGGSTRNGRDSEAKR) is disordered.

This sequence belongs to the bacterial ribosomal protein bL27 family.

The polypeptide is Large ribosomal subunit protein bL27 (Actinobacillus pleuropneumoniae serotype 5b (strain L20)).